Here is a 420-residue protein sequence, read N- to C-terminus: Putative FBD-associated F-box protein At1g78730 (420 aa).

In terms of domain architecture, F-box spans 21–71; that stretch reads LDWLRKLPDSLLCQVFLNLPTKDVVKTSVLSSTWGNIWRSVPGLDLGYGDF. The region spanning 341 to 390 is the FBD domain; it reads ISILPGPQCNLPALEFVDILKPMVEKETELKLMSYFLEKSTILKKLTLRL.

This chain is Putative FBD-associated F-box protein At1g78730, found in Arabidopsis thaliana (Mouse-ear cress).